Consider the following 190-residue polypeptide: Interferon alpha-9 (190 aa).

The N-terminal stretch at 1–23 (MARPFAFLMVLVVISYWSTCSLG) is a signal peptide. Disulfide bonds link Cys24–Cys122 and Cys52–Cys162. Asn101 carries an N-linked (GlcNAc...) asparagine glycan.

The protein belongs to the alpha/beta interferon family.

The protein resides in the secreted. In terms of biological role, produced by macrophages, IFN-alpha have antiviral activities. Interferon stimulates the production of two enzymes: a protein kinase and an oligoadenylate synthetase. This Mus musculus (Mouse) protein is Interferon alpha-9 (Ifna9).